The chain runs to 53 residues: UPF0391 membrane protein YPDSF_3201 (53 aa).

A run of 2 helical transmembrane segments spans residues 4–24 (WGII…GGLA) and 27–47 (AAWA…ISLF).

The protein belongs to the UPF0391 family.

The protein localises to the cell membrane. This is UPF0391 membrane protein YPDSF_3201 from Yersinia pestis (strain Pestoides F).